The sequence spans 517 residues: Cytochrome P450 monooxygenase 124 (517 aa).

A helical membrane pass occupies residues 3–23 (SLLVLFVSLLALGALKKHLDF). Cysteine 453 contacts heme.

The protein belongs to the cytochrome P450 family. Requires heme as cofactor.

It localises to the membrane. The protein operates within secondary metabolite biosynthesis. In terms of biological role, cytochrome P450 monooxygenase that is able to use trans-stilbene as a substrate for oxidation. This chain is Cytochrome P450 monooxygenase 124, found in Postia placenta (strain ATCC 44394 / Madison 698-R) (Brown rot fungus).